A 471-amino-acid chain; its full sequence is MEKQENVGHIVQIFGPVIDVQFPNEHMPAILSALEVKINDESIIFEVAQHLGEGIVRAIAMSMTYNLSKGLEVYDTGSQISVPVGKQVLSRMFNVLGQPIDGGKPLDSFIKNPIHANAPTYLEQKATSEILVTGIKVIDLLIPFIKGGKIGLFGGAGVGKTVLVQELINNIASKHGGLSVFAGVGERSREGNDLYFEMKKAGVLDKTALVFGQMNEPPGARMRVALSALTMAEYFRDYENQDVLLFIDNIFRFTQAGSEVSTLLGRIPSTVGYQPTLSTEMGQLQERITSTIRGSITSVQAVYVPADDITDPAPATTFSHLDAKTVLDRGIAALGIYPAVDPLASSSRALEPNIVGKKHYLVAKKVVQILQRFKELQDIIAILGVDELSESDKQVVARARRIRNFLSQPFFVAQKFSGIQGQFIKIQDTVNNFDELLSGKYDNIPEEAFLYVGTIDQALEKAKKMGWSEKN.

An ATP-binding site is contributed by 154–161 (GGAGVGKT).

The protein belongs to the ATPase alpha/beta chains family. In terms of assembly, F-type ATPases have 2 components, CF(1) - the catalytic core - and CF(0) - the membrane proton channel. CF(1) has five subunits: alpha(3), beta(3), gamma(1), delta(1), epsilon(1). CF(0) has three main subunits: a(1), b(2) and c(9-12). The alpha and beta chains form an alternating ring which encloses part of the gamma chain. CF(1) is attached to CF(0) by a central stalk formed by the gamma and epsilon chains, while a peripheral stalk is formed by the delta and b chains.

Its subcellular location is the cell membrane. It carries out the reaction ATP + H2O + 4 H(+)(in) = ADP + phosphate + 5 H(+)(out). Produces ATP from ADP in the presence of a proton gradient across the membrane. The catalytic sites are hosted primarily by the beta subunits. This is ATP synthase subunit beta from Mesomycoplasma hyopneumoniae (strain 232) (Mycoplasma hyopneumoniae).